Consider the following 98-residue polypeptide: Large ribosomal subunit protein uL23 (98 aa).

It belongs to the universal ribosomal protein uL23 family. Part of the 50S ribosomal subunit. Contacts protein L29, and trigger factor when it is bound to the ribosome.

In terms of biological role, one of the early assembly proteins it binds 23S rRNA. One of the proteins that surrounds the polypeptide exit tunnel on the outside of the ribosome. Forms the main docking site for trigger factor binding to the ribosome. The protein is Large ribosomal subunit protein uL23 of Bifidobacterium longum (strain DJO10A).